We begin with the raw amino-acid sequence, 294 residues long: 4-hydroxy-tetrahydrodipicolinate synthase (294 aa).

Position 47 (threonine 47) interacts with pyruvate. Tyrosine 135 acts as the Proton donor/acceptor in catalysis. Catalysis depends on lysine 163, which acts as the Schiff-base intermediate with substrate. Pyruvate is bound at residue threonine 205.

The protein belongs to the DapA family. In terms of assembly, homotetramer; dimer of dimers.

Its subcellular location is the cytoplasm. The enzyme catalyses L-aspartate 4-semialdehyde + pyruvate = (2S,4S)-4-hydroxy-2,3,4,5-tetrahydrodipicolinate + H2O + H(+). It participates in amino-acid biosynthesis; L-lysine biosynthesis via DAP pathway; (S)-tetrahydrodipicolinate from L-aspartate: step 3/4. In terms of biological role, catalyzes the condensation of (S)-aspartate-beta-semialdehyde [(S)-ASA] and pyruvate to 4-hydroxy-tetrahydrodipicolinate (HTPA). The protein is 4-hydroxy-tetrahydrodipicolinate synthase of Rickettsia akari (strain Hartford).